The following is a 220-amino-acid chain: Deoxyribose-phosphate aldolase (220 aa).

The active-site Proton donor/acceptor is the aspartate 89. Lysine 151 functions as the Schiff-base intermediate with acetaldehyde in the catalytic mechanism. Lysine 180 acts as the Proton donor/acceptor in catalysis.

It belongs to the DeoC/FbaB aldolase family. DeoC type 1 subfamily.

The protein resides in the cytoplasm. It catalyses the reaction 2-deoxy-D-ribose 5-phosphate = D-glyceraldehyde 3-phosphate + acetaldehyde. Its pathway is carbohydrate degradation; 2-deoxy-D-ribose 1-phosphate degradation; D-glyceraldehyde 3-phosphate and acetaldehyde from 2-deoxy-alpha-D-ribose 1-phosphate: step 2/2. Catalyzes a reversible aldol reaction between acetaldehyde and D-glyceraldehyde 3-phosphate to generate 2-deoxy-D-ribose 5-phosphate. In Streptococcus gordonii (strain Challis / ATCC 35105 / BCRC 15272 / CH1 / DL1 / V288), this protein is Deoxyribose-phosphate aldolase.